The sequence spans 1396 residues: Integrin alpha-PS2 (1396 aa).

A signal peptide spans 1 to 31; sequence MSGDSIHRRRMALHCPITSLILLLIAMSAHG. The Extracellular portion of the chain corresponds to 32-1341; that stretch reads YNIDLPSYVR…EPEPLQVPDV (1310 aa). FG-GAP repeat units follow at residues 36–106, 117–174, 186–239, 266–317, 318–383, 386–445, and 452–514; these read LPSY…DCKL, NVDK…FTSH, RTNN…FPFK, STSE…RWNM, ANIF…TEEK, TTEH…GPLA, and KSEQ…FASN. Asparagine 69 is a glycosylation site (N-linked (GlcNAc...) asparagine). An N-linked (GlcNAc...) asparagine glycan is attached at asparagine 209. Residue asparagine 322 is glycosylated (N-linked (GlcNAc...) asparagine). N-linked (GlcNAc...) asparagine glycans are attached at residues asparagine 584, asparagine 598, asparagine 741, asparagine 783, asparagine 833, and asparagine 959. Disordered stretches follow at residues 960 to 1107 and 1159 to 1246; these read STDA…LGTL and PGFQ…KPLQ. The span at 963–979 shows a compositional bias: basic and acidic residues; it reads AGDKLSPKQVEQRRQED. Over residues 997–1006 the composition is skewed to polar residues; sequence QAVQEPQVNQ. Asparagine 1005 carries N-linked (GlcNAc...) asparagine glycosylation. Low complexity-rich tracts occupy residues 1007 to 1021 and 1060 to 1071; these read TSFT…SSGS and QQQQQHQQLLLA. Positions 1082 to 1099 are enriched in polar residues; that stretch reads VTFNDKSQFGGRNNNFHT. 2 stretches are compositionally biased toward low complexity: residues 1162-1182 and 1217-1226; these read QGQT…GYQT and SSSSSSSSSS. N-linked (GlcNAc...) asparagine glycosylation is found at asparagine 1299 and asparagine 1307. The helical transmembrane segment at 1342–1366 threads the bilayer; that stretch reads VPLWVVVLAACAGALIFLLLVWLLY. Residues 1367–1396 are Cytoplasmic-facing; that stretch reads KCGFFNRNRPTDHSQERQPLRNGYHGDEHL. Positions 1377-1396 are disordered; it reads TDHSQERQPLRNGYHGDEHL.

The protein belongs to the integrin alpha chain family. In terms of assembly, heterodimer of an alpha and a beta subunit. The alpha subunit is composed of a heavy and a light chain linked by a disulfide bond. Alpha-PS2 associates with beta-PS. Post-translationally, the heavy-light chain cleavage site is either in 1230-1231, or 1233-1234, or 1243-1244. In ovaries, highly expressed in follicle cells. At syncytial blastoderm stage, expressed in the embryonic mesodermal precursors but not in the ectoderm. At embryonic stages 7 and 10, expression is restricted to the mesoderm. At stage 12, expressed in the gonadal sheath and the interstitial cells of the gonad. In stage 16 embryos, expressed in the somatic and visceral muscles where localizes to sites of attachment between adjacent muscles. In third larval instar wing imaginal disk, expressed in the ventral compartment and in a subset of adepithelial and peripodial cells (at protein level).

Its subcellular location is the apical cell membrane. The protein localises to the lateral cell membrane. It is found in the basal cell membrane. In terms of biological role, alpha-PS2/beta-PS is a receptor for Tig, wb and Ten-m. Involved in the function and/or development of the olfactory system. This chain is Integrin alpha-PS2 (if), found in Drosophila melanogaster (Fruit fly).